Here is a 468-residue protein sequence, read N- to C-terminus: V-type proton ATPase subunit S1 (468 aa).

A signal peptide spans 1–35 (MMAATAAAQVRAGTRWAPALCRMPWLPLMLVAAAA). Residues 36–228 (ATSEQQVPLV…TAVRPSRVAR (193 aa)) constitute a propeptide that is removed on maturation. The Lumenal segment spans residues 36 to 417 (ATSEQQVPLV…KKFSYASDCA (382 aa)). N-linked (GlcNAc...) asparagine glycosylation is found at Asn167, Asn258, Asn271, Asn294, Asn301, Asn348, Asn355, and Asn404. Cys369 and Cys416 are disulfide-bonded. A helical transmembrane segment spans residues 418-438 (GFFSPGIWMGLLTSLFMLFIF). Residues 439-468 (TYGLHMILSLKTMDRFDDHKGPTITLTQIV) lie on the Cytoplasmic side of the membrane.

The protein belongs to the vacuolar ATPase subunit S1 family. As to quaternary structure, accessory component of the multisubunit proton-transporting vacuolar (V)-ATPase protein pump. Interacts (via N-terminus) with ATP6AP2 (via N-terminus). Interacts with RNASEK. Interacts with TMEM106B (via C-terminus). In terms of processing, N-glycosylated.

The protein localises to the endoplasmic reticulum membrane. Its subcellular location is the endoplasmic reticulum-Golgi intermediate compartment membrane. The protein resides in the cytoplasmic vesicle. It is found in the secretory vesicle. It localises to the synaptic vesicle membrane. The protein localises to the clathrin-coated vesicle membrane. In terms of biological role, accessory subunit of the proton-transporting vacuolar (V)-ATPase protein pump, which is required for luminal acidification of secretory vesicles. Guides the V-type ATPase into specialized subcellular compartments, such as neuroendocrine regulated secretory vesicles or the ruffled border of the osteoclast, thereby regulating its activity. Involved in membrane trafficking and Ca(2+)-dependent membrane fusion. May play a role in the assembly of the V-type ATPase complex. In aerobic conditions, involved in intracellular iron homeostasis, thus triggering the activity of Fe(2+) prolyl hydroxylase (PHD) enzymes, and leading to HIF1A hydroxylation and subsequent proteasomal degradation. In islets of Langerhans cells, may regulate the acidification of dense-core secretory granules. In Bos taurus (Bovine), this protein is V-type proton ATPase subunit S1 (ATP6AP1).